Reading from the N-terminus, the 33-residue chain is Alpha-amanitin proprotein (33 aa).

A propeptide spanning residues 1–10 (MSDINATRLP) is cleaved from the precursor. A (3R,4R)-4,5-dihydroxyisoleucine; in form alpha-amanitin modification is found at I11. I11 carries the post-translational modification (3R,4S)-4-hydroxyisoleucine; in form gamma-amanitin. Positions 11–18 (IWGIGCNP) form a cross-link, cyclopeptide (Ile-Pro). The 2'-cysteinyl-6'-hydroxytryptophan sulfoxide (Trp-Cys) cross-link spans 12–16 (WGIGC). P18 is modified (4-hydroxyproline). Positions 19–33 (CVGDEVTALITRGEA) are excised as a propeptide.

This sequence belongs to the MSDIN fungal toxin family. In terms of processing, processed by the macrocyclase-peptidase enzyme POPB to yield a toxic cyclic decapeptide. POPB first removes 10 residues from the N-terminus. Conformational trapping of the remaining peptide forces the enzyme to release this intermediate rather than proceed to macrocyclization. The enzyme rebinds the remaining peptide in a different conformation and catalyzes macrocyclization of the N-terminal 8 residues.

Its function is as follows. Major toxin belonging to the bicyclic octapeptides amatoxins that acts by binding non-competitively to RNA polymerase II and greatly slowing the elongation of transcripts from target promoters. The chain is Alpha-amanitin proprotein from Amanita pallidorosea.